Reading from the N-terminus, the 227-residue chain is Uracil-DNA glycosylase (227 aa).

Asp-68 functions as the Proton acceptor in the catalytic mechanism.

It belongs to the uracil-DNA glycosylase (UDG) superfamily. UNG family.

The protein localises to the cytoplasm. It catalyses the reaction Hydrolyzes single-stranded DNA or mismatched double-stranded DNA and polynucleotides, releasing free uracil.. Its function is as follows. Excises uracil residues from the DNA which can arise as a result of misincorporation of dUMP residues by DNA polymerase or due to deamination of cytosine. In Mycobacterium ulcerans (strain Agy99), this protein is Uracil-DNA glycosylase.